The sequence spans 101 residues: Small ribosomal subunit protein uS10 (101 aa).

It belongs to the universal ribosomal protein uS10 family. Part of the 30S ribosomal subunit.

Its function is as follows. Involved in the binding of tRNA to the ribosomes. The sequence is that of Small ribosomal subunit protein uS10 from Amoebophilus asiaticus (strain 5a2).